Consider the following 345-residue polypeptide: Hydroxymethylglutaryl-CoA synthase (345 aa).

Residue aspartate 28 participates in (3S)-3-hydroxy-3-methylglutaryl-CoA binding. Glutamate 80 (proton donor/acceptor) is an active-site residue. (3S)-3-hydroxy-3-methylglutaryl-CoA-binding residues include cysteine 112 and threonine 153. Cysteine 112 serves as the catalytic Acyl-thioester intermediate. A CoA-binding site is contributed by arginine 199. The (3S)-3-hydroxy-3-methylglutaryl-CoA site is built by threonine 201 and histidine 234. The active-site Proton donor/acceptor is the histidine 234. Lysine 239 lines the CoA pocket. 3 residues coordinate (3S)-3-hydroxy-3-methylglutaryl-CoA: arginine 243, asparagine 266, and serine 296.

It belongs to the thiolase-like superfamily. Archaeal HMG-CoA synthase family. In terms of assembly, interacts with acetoacetyl-CoA thiolase that catalyzes the precedent step in the pathway and with a DUF35 protein. The acetoacetyl-CoA thiolase/HMG-CoA synthase complex channels the intermediate via a fused CoA-binding site, which allows for efficient coupling of the endergonic thiolase reaction with the exergonic HMGCS reaction.

The catalysed reaction is acetoacetyl-CoA + acetyl-CoA + H2O = (3S)-3-hydroxy-3-methylglutaryl-CoA + CoA + H(+). Its pathway is metabolic intermediate biosynthesis; (R)-mevalonate biosynthesis; (R)-mevalonate from acetyl-CoA: step 2/3. Its function is as follows. Catalyzes the condensation of acetyl-CoA with acetoacetyl-CoA to form 3-hydroxy-3-methylglutaryl-CoA (HMG-CoA). Functions in the mevalonate (MVA) pathway leading to isopentenyl diphosphate (IPP), a key precursor for the biosynthesis of isoprenoid compounds that are building blocks of archaeal membrane lipids. The protein is Hydroxymethylglutaryl-CoA synthase of Methanocaldococcus jannaschii (strain ATCC 43067 / DSM 2661 / JAL-1 / JCM 10045 / NBRC 100440) (Methanococcus jannaschii).